Reading from the N-terminus, the 842-residue chain is Elongation factor 2 (842 aa).

The region spanning 17–253 (TNVRNMSVIA…LWGDSYFNPK (237 aa)) is the tr-type G domain. GTP-binding positions include 26–33 (AHVDHGKS), 158–161 (NKVD), and 213–215 (SGL). H699 is modified (diphthamide).

The protein belongs to the TRAFAC class translation factor GTPase superfamily. Classic translation factor GTPase family. EF-G/EF-2 subfamily.

The protein localises to the cytoplasm. It carries out the reaction GTP + H2O = GDP + phosphate + H(+). In terms of biological role, catalyzes the GTP-dependent ribosomal translocation step during translation elongation. During this step, the ribosome changes from the pre-translocational (PRE) to the post-translocational (POST) state as the newly formed A-site-bound peptidyl-tRNA and P-site-bound deacylated tRNA move to the P and E sites, respectively. Catalyzes the coordinated movement of the two tRNA molecules, the mRNA and conformational changes in the ribosome. The protein is Elongation factor 2 (EFT1) of Debaryomyces hansenii (strain ATCC 36239 / CBS 767 / BCRC 21394 / JCM 1990 / NBRC 0083 / IGC 2968) (Yeast).